Reading from the N-terminus, the 233-residue chain is MSKLTKRQKEINSRIEHEKQYTIEEAVQILNDLPALKFKESIDIAVNLGVDPRKSDQVVRGATNLPAGTGKTKRVAVFAQGAAAEAAKEAGADIVGFEDLAESIKAGNMDFDVVIAAPDAMRVVGQLGTILGPRGLMPNPKVGTVTPNVAEAVLNAKAGQAQYRVDKAGIIHTTIGQVGFTAEQVIQNAEALISDLRRAKPATSKGTFIKKITLSSTMGPGLSIDPVPYRTAK.

The protein belongs to the universal ribosomal protein uL1 family. In terms of assembly, part of the 50S ribosomal subunit.

Binds directly to 23S rRNA. The L1 stalk is quite mobile in the ribosome, and is involved in E site tRNA release. In terms of biological role, protein L1 is also a translational repressor protein, it controls the translation of the L11 operon by binding to its mRNA. This is Large ribosomal subunit protein uL1 from Psychrobacter cryohalolentis (strain ATCC BAA-1226 / DSM 17306 / VKM B-2378 / K5).